The sequence spans 352 residues: Ion-translocating oxidoreductase complex subunit D (352 aa).

5 helical membrane passes run 20–40 (IMLLVLLAAVPGIAAQLWFFG), 42–62 (GTLVQILLASVSALLAEALVL), 78–109 (ALLTGLLLAVSIPPLAPWWMVVLGTVFAVIIA), 123–143 (PAMIGYVVLLISFPVQMTSWL), and 148–168 (IAVNIPGFIDAIQVIFSGHTA). Residue threonine 187 is modified to FMN phosphoryl threonine. 5 consecutive transmembrane segments (helical) span residues 214 to 234 (ILAGAGWQWVNLAWLAGGVWL), 242 to 262 (WHIPLSFLVTLALCAMLGWLF), 267 to 287 (LAAPQIHLLSGATMLGAFFIL), 301 to 321 (LIFGALAGLLVWLIRSFGGYP), and 322 to 342 (DGVAFAVLLANITVPLIDYYT).

The protein belongs to the NqrB/RnfD family. The complex is composed of six subunits: RsxA, RsxB, RsxC, RsxD, RsxE and RsxG. FMN is required as a cofactor.

It localises to the cell inner membrane. Functionally, part of a membrane-bound complex that couples electron transfer with translocation of ions across the membrane. Required to maintain the reduced state of SoxR. Probably transfers electron from NAD(P)H to SoxR. This is Ion-translocating oxidoreductase complex subunit D from Escherichia coli (strain K12).